Consider the following 591-residue polypeptide: Aspartate--tRNA(Asp/Asn) ligase (591 aa).

Glutamate 175 contributes to the L-aspartate binding site. Residues 199–202 (QQFK) form an aspartate region. Residues arginine 221 and histidine 453 each coordinate L-aspartate. 221–223 (RDE) provides a ligand contact to ATP. Glutamate 486 lines the ATP pocket. Arginine 493 lines the L-aspartate pocket. 538 to 541 (GIDR) is an ATP binding site.

This sequence belongs to the class-II aminoacyl-tRNA synthetase family. Type 1 subfamily. Homodimer.

The protein localises to the cytoplasm. It carries out the reaction tRNA(Asx) + L-aspartate + ATP = L-aspartyl-tRNA(Asx) + AMP + diphosphate. Aspartyl-tRNA synthetase with relaxed tRNA specificity since it is able to aspartylate not only its cognate tRNA(Asp) but also tRNA(Asn). Reaction proceeds in two steps: L-aspartate is first activated by ATP to form Asp-AMP and then transferred to the acceptor end of tRNA(Asp/Asn). The protein is Aspartate--tRNA(Asp/Asn) ligase of Cereibacter sphaeroides (strain KD131 / KCTC 12085) (Rhodobacter sphaeroides).